The chain runs to 455 residues: UDP-N-acetylmuramoylalanine--D-glutamate ligase (455 aa).

117-123 (GSAGKTT) serves as a coordination point for ATP.

Belongs to the MurCDEF family.

The protein localises to the cytoplasm. The catalysed reaction is UDP-N-acetyl-alpha-D-muramoyl-L-alanine + D-glutamate + ATP = UDP-N-acetyl-alpha-D-muramoyl-L-alanyl-D-glutamate + ADP + phosphate + H(+). Its pathway is cell wall biogenesis; peptidoglycan biosynthesis. Cell wall formation. Catalyzes the addition of glutamate to the nucleotide precursor UDP-N-acetylmuramoyl-L-alanine (UMA). The chain is UDP-N-acetylmuramoylalanine--D-glutamate ligase from Symbiobacterium thermophilum (strain DSM 24528 / JCM 14929 / IAM 14863 / T).